The sequence spans 281 residues: Hydroxyethylthiazole kinase (281 aa).

ATP is bound by residues R124 and S169.

It belongs to the Thz kinase family. Mg(2+) serves as cofactor.

The enzyme catalyses 5-(2-hydroxyethyl)-4-methylthiazole + ATP = 4-methyl-5-(2-phosphooxyethyl)-thiazole + ADP + H(+). Its pathway is cofactor biosynthesis; thiamine diphosphate biosynthesis; 4-methyl-5-(2-phosphoethyl)-thiazole from 5-(2-hydroxyethyl)-4-methylthiazole: step 1/1. Its function is as follows. Catalyzes the phosphorylation of the hydroxyl group of 4-methyl-5-beta-hydroxyethylthiazole (THZ). The chain is Hydroxyethylthiazole kinase from Rhodococcus erythropolis (strain PR4 / NBRC 100887).